The sequence spans 1093 residues: Regulator of nonsense transcripts 1 homolog (1093 aa).

A disordered region spans residues 42–79 (YGVYGGRGPRGNGRRRHDDDDNETEVLDDDDDESLASV). Residues 61-75 (DDNETEVLDDDDDES) show a composition bias toward acidic residues. One can recognise a Upf1 CH-rich domain in the interval 95–252 (EKELPPHACA…AKLEEMWKEA (158 aa)). Zn(2+) is bound by residues Cys103, Cys106, Cys117, Cys120, Cys125, His135, His139, His145, Cys163, Cys166, Cys189, and Cys193. The interval 103 to 135 (CAYCGIHSPSSVVKCLTCNKWFCSAKGSAFSSH) is C3H. A CC/SHH/C region spans residues 117-145 (CLTCNKWFCSAKGSAFSSHIVNHLVRARH). The C4 stretch occupies residues 163-193 (CYNCGTKNVFILGFIPAKSDTVVVLLCRQPC). ATP is bound by residues Gln460, 480 to 484 (GTGKT), Gln650, Tyr687, and Glu818.

Belongs to the DNA2/NAM7 helicase family.

It localises to the cytoplasm. It carries out the reaction ATP + H2O = ADP + phosphate + H(+). Its function is as follows. RNA-dependent helicase required for nonsense-mediated decay (NMD) of aberrant mRNAs containing premature stop codons and modulates the expression level of normal mRNAs. Also capable of unwinding double-stranded DNA and translocating on single-stranded DNA. This is Regulator of nonsense transcripts 1 homolog from Neurospora crassa (strain ATCC 24698 / 74-OR23-1A / CBS 708.71 / DSM 1257 / FGSC 987).